A 265-amino-acid chain; its full sequence is Cell division protein FtsQ (265 aa).

Residues M1–R13 are compositionally biased toward low complexity. The interval M1–K25 is disordered. Residues M1–R35 lie on the Cytoplasmic side of the membrane. Over residues T14–A23 the composition is skewed to pro residues. A helical transmembrane segment spans residues R36 to G58. Topologically, residues S59–S265 are extracellular. The POTRA domain maps to L62–R131.

This sequence belongs to the FtsQ/DivIB family. FtsQ subfamily.

It is found in the cell membrane. Essential cell division protein. In Streptomyces bingchenggensis (strain BCW-1), this protein is Cell division protein FtsQ.